Consider the following 870-residue polypeptide: Lysosomal cholesterol signaling protein (870 aa).

At 1-38 (MNSNLPAENLTIAVNMTKTLPTAVTHGFNSTNDPPSMS) the chain is on the lumenal side. Residues 1-370 (MNSNLPAENL…SAWLLTFPTM (370 aa)) form a PIN-like transporter region. Asparagine 9, asparagine 15, and asparagine 29 each carry an N-linked (GlcNAc...) asparagine glycan. The chain crosses the membrane as a helical span at residues 39–59 (ITRLFPALLECFGIVLCGYIA). Residues phenylalanine 43 and tyrosine 57 each contribute to the cholesterol site. Topologically, residues 60-79 (GRANVITSTQAKGLGNFVSR) are cytoplasmic. A helical transmembrane segment spans residues 80–100 (FALPALLFKNMVVLNFSNVDW). Residues 101 to 104 (SFLY) are Lumenal-facing. Residues 105–125 (SILIAKASVFFIVCVLTLLVA) form a helical membrane-spanning segment. Residues 126–133 (SPDSRFSK) lie on the Cytoplasmic side of the membrane. The chain crosses the membrane as a discontinuously helical span at residues 134–154 (AGLFPIFATQSNDFALGYPIV). Over 155–167 (EALYQTTYPEYLQ) the chain is Lumenal. Residues 168 to 188 (YIYLVAPISLMMLNPIGFIFC) traverse the membrane as a helical segment. Topologically, residues 189–213 (EIQKWKDTQNASQNKIKIVGLGLLR) are cytoplasmic. A discontinuously helical transmembrane segment spans residues 214-234 (VLQNPIVFMVFIGIAFNFILD). Over 235-243 (RKVPVYVEN) the chain is Lumenal. A discontinuously helical transmembrane segment spans residues 244–264 (FLDGLGNSFSGSALFYLGLTM). At 265-273 (VGKIKRLKK) the chain is on the cytoplasmic side. Cholesterol is bound by residues glycine 266, lysine 267, and isoleucine 268. The helical transmembrane segment at 274 to 294 (SAFVVLILLITAKLLVLPLLC) threads the bilayer. Residues 295–315 (REMVELLDKGDSVVNHTSLSN) lie on the Lumenal side of the membrane. An N-linked (GlcNAc...) asparagine glycan is attached at asparagine 309. A discontinuously helical transmembrane segment spans residues 316-336 (YAFLYGVFPVAPGVAIFATQF). Over 337–346 (NMEVEIITSG) the chain is Cytoplasmic. The chain crosses the membrane as a helical span at residues 347–367 (MVISTFVSAPIMYVSAWLLTF). At 368–381 (PTMDPKPLAYAIQN) the chain is on the lumenal side. A GPCR region spans residues 380 to 717 (QNVSFDISIV…FGIFGLDKHL (338 aa)). Asparagine 381 carries an N-linked (GlcNAc...) asparagine glycan. A helical transmembrane segment spans residues 382–402 (VSFDISIVSLISLIWSLAILL). Residues 403-414 (LSKKYKQLPHML) are Cytoplasmic-facing. The chain crosses the membrane as a helical span at residues 415–435 (TTNLLIAQSIVCAGMMIWNFV). Topologically, residues 436–438 (KEK) are lumenal. The helical transmembrane segment at 439-459 (NFVGQILVFVLLYSSLYSTYL) threads the bilayer. The Cytoplasmic segment spans residues 460–480 (WTGLLAISLFLLKKRERVQIP). Residues 481–501 (VGIIIISGWGIPALLVGVLLI) form a helical membrane-spanning segment. Over 502 to 520 (TGKHNGDSIDSAFFYGKEQ) the chain is Lumenal. A helical transmembrane segment spans residues 521-541 (MITTAVTLFCSILIAGISLMC). Topologically, residues 542-660 (MNQTAQAGSY…GDQQLTRHVL (119 aa)) are cytoplasmic. Position 657 (arginine 657) interacts with cholesterol. Residues 661–681 (LCLLLIIGLFANLSSCLWWLF) traverse the membrane as a helical segment. The Lumenal segment spans residues 682-691 (NQEPGRLYVE). A helical membrane pass occupies residues 692–712 (LQFFCAVFNFGQGFISFGIFG). At 713–870 (LDKHLIILPF…SSPPSHSPKT (158 aa)) the chain is on the cytoplasmic side. The region spanning 757-835 (YHRDLCIRNI…DEYLFYRFLQ (79 aa)) is the DEP domain.

As to quaternary structure, homodimer; via the transporter region and DEP domain. Interacts with the GATOR1 complex and prevents interaction between GATOR1 and KICSTOR; this interaction is disrupted upon cholesterol starvation.

Its subcellular location is the lysosome membrane. Its function is as follows. Cholesterol-binding protein that acts as a regulator of mTORC1 signaling pathway. Acts as a sensor of cholesterol to signal cholesterol sufficiency to mTORC1: in presence of cholesterol, binds cholesterol, leading to disruption of the interaction between the GATOR1 and KICSTOR complexes and promotion of mTORC1 signaling. Upon cholesterol starvation, GPR155/LYCHOS is unable to perturb the association between GATOR1 and KICSTOR, leading to mTORC1 signaling inhibition. Binds indole-3-acetic acid and may play a role in tryptophan metabolism. The chain is Lysosomal cholesterol signaling protein from Homo sapiens (Human).